A 1411-amino-acid polypeptide reads, in one-letter code: DNA-directed RNA polymerase subunit beta' (1411 aa).

Residues Cys70, Cys72, Cys85, and Cys88 each coordinate Zn(2+). Positions 458, 460, and 462 each coordinate Mg(2+). Zn(2+)-binding residues include Cys813, Cys887, Cys894, and Cys897. A disordered region spans residues 1391–1411 (AQAEVPELDGSSVTASDAAAD).

It belongs to the RNA polymerase beta' chain family. The RNAP catalytic core consists of 2 alpha, 1 beta, 1 beta' and 1 omega subunit. When a sigma factor is associated with the core the holoenzyme is formed, which can initiate transcription. It depends on Mg(2+) as a cofactor. Zn(2+) serves as cofactor.

The catalysed reaction is RNA(n) + a ribonucleoside 5'-triphosphate = RNA(n+1) + diphosphate. DNA-dependent RNA polymerase catalyzes the transcription of DNA into RNA using the four ribonucleoside triphosphates as substrates. The sequence is that of DNA-directed RNA polymerase subunit beta' from Verminephrobacter eiseniae (strain EF01-2).